Here is a 632-residue protein sequence, read N- to C-terminus: U-box domain-containing protein 14 (632 aa).

In terms of domain architecture, U-box spans 247–321 (VIPEYFRCPI…ALWCESNGIE (75 aa)). ARM repeat units follow at residues 377-416 (VDNR…NLSI), 418-457 (EGNK…SLSV), 459-498 (DENK…NLCI), 500-539 (QGNK…ILST), and 541-580 (QEGK…YLCI).

In terms of assembly, homodimer. Interacts with SNL1. Binds to SD11, SD16, SD17, SD18, SD113, SD129 and SD25. Expressed in flowers, green siliques, seeds and rosette leaves.

The enzyme catalyses S-ubiquitinyl-[E2 ubiquitin-conjugating enzyme]-L-cysteine + [acceptor protein]-L-lysine = [E2 ubiquitin-conjugating enzyme]-L-cysteine + N(6)-ubiquitinyl-[acceptor protein]-L-lysine.. It participates in protein modification; protein ubiquitination. Functions as an E3 ubiquitin ligase with specific E2 ubiquitin-conjugating enzymes. Undergoes auto-ubiquitination. This Arabidopsis thaliana (Mouse-ear cress) protein is U-box domain-containing protein 14 (PUB14).